The following is a 714-amino-acid chain: Ribonucleoside-diphosphate reductase 2 subunit alpha (714 aa).

Substrate is bound by residues Thr-161, 177–178 (SC), Gly-206, 386–390 (NLCSE), and 588–592 (PTGSI). The cysteines at positions 178 and 415 are disulfide-linked. Asn-386 functions as the Proton acceptor in the catalytic mechanism. Residue Cys-388 is the Cysteine radical intermediate of the active site. Glu-390 acts as the Proton acceptor in catalysis.

Belongs to the ribonucleoside diphosphate reductase large chain family. In terms of assembly, tetramer of two alpha and two beta subunits.

The enzyme catalyses a 2'-deoxyribonucleoside 5'-diphosphate + [thioredoxin]-disulfide + H2O = a ribonucleoside 5'-diphosphate + [thioredoxin]-dithiol. With respect to regulation, under complex allosteric control mediated by deoxynucleoside triphosphates and ATP binding. The type of nucleotide bound at the specificity site determines substrate preference. It seems probable that ATP makes the enzyme reduce CDP and UDP, dGTP favors ADP reduction and dTTP favors GDP reduction. Functionally, provides the precursors necessary for DNA synthesis. Catalyzes the biosynthesis of deoxyribonucleotides from the corresponding ribonucleotides. R1E contains the binding sites for both substrates and allosteric effectors and carries out the actual reduction of the ribonucleotide. The sequence is that of Ribonucleoside-diphosphate reductase 2 subunit alpha (nrdE) from Escherichia coli (strain K12).